The primary structure comprises 570 residues: Urease subunit alpha (570 aa).

The 440-residue stretch at 131 to 570 (GGMDSHIHFI…LPMAQRYFLF (440 aa)) folds into the Urease domain. Ni(2+)-binding residues include His-136, His-138, and Lys-219. Position 219 is an N6-carboxylysine (Lys-219). His-221 contributes to the substrate binding site. Residues His-248 and His-274 each contribute to the Ni(2+) site. Catalysis depends on His-322, which acts as the Proton donor. Residue Asp-362 coordinates Ni(2+).

The protein belongs to the metallo-dependent hydrolases superfamily. Urease alpha subunit family. As to quaternary structure, heterotrimer of UreA (gamma), UreB (beta) and UreC (alpha) subunits. Three heterotrimers associate to form the active enzyme. Requires Ni cation as cofactor. In terms of processing, carboxylation allows a single lysine to coordinate two nickel ions.

Its subcellular location is the cytoplasm. It carries out the reaction urea + 2 H2O + H(+) = hydrogencarbonate + 2 NH4(+). Its pathway is nitrogen metabolism; urea degradation; CO(2) and NH(3) from urea (urease route): step 1/1. This Rhizobium etli (strain ATCC 51251 / DSM 11541 / JCM 21823 / NBRC 15573 / CFN 42) protein is Urease subunit alpha.